Here is a 212-residue protein sequence, read N- to C-terminus: Thymidylate kinase (212 aa).

10–17 provides a ligand contact to ATP; it reads GPDGAGKT.

The protein belongs to the thymidylate kinase family.

The catalysed reaction is dTMP + ATP = dTDP + ADP. Its function is as follows. Phosphorylation of dTMP to form dTDP in both de novo and salvage pathways of dTTP synthesis. The polypeptide is Thymidylate kinase (Enterococcus faecalis (strain ATCC 700802 / V583)).